Here is a 186-residue protein sequence, read N- to C-terminus: Peptidyl-tRNA hydrolase (186 aa).

Tyr-13 contacts tRNA. His-18 serves as the catalytic Proton acceptor. Residues Tyr-59, Asn-61, and Asn-107 each contribute to the tRNA site.

It belongs to the PTH family. In terms of assembly, monomer.

The protein resides in the cytoplasm. It carries out the reaction an N-acyl-L-alpha-aminoacyl-tRNA + H2O = an N-acyl-L-amino acid + a tRNA + H(+). Functionally, hydrolyzes ribosome-free peptidyl-tRNAs (with 1 or more amino acids incorporated), which drop off the ribosome during protein synthesis, or as a result of ribosome stalling. Its function is as follows. Catalyzes the release of premature peptidyl moieties from peptidyl-tRNA molecules trapped in stalled 50S ribosomal subunits, and thus maintains levels of free tRNAs and 50S ribosomes. This is Peptidyl-tRNA hydrolase from Thermotoga petrophila (strain ATCC BAA-488 / DSM 13995 / JCM 10881 / RKU-1).